A 568-amino-acid polypeptide reads, in one-letter code: Sesquiterpene synthase 14 (568 aa).

Positions 319, 323, 463, and 471 each coordinate Mg(2+). The DDXXD motif motif lies at 319-323 (DDLYD).

It belongs to the terpene synthase family. Tpsa subfamily. Mg(2+) serves as cofactor. It depends on Mn(2+) as a cofactor. Mostly expressed in roots, to a lower extent in flowers and, at low levels, in fruits.

The enzyme catalyses (2Z,6Z)-farnesyl diphosphate = (E)-alpha-bisabolene + diphosphate. It carries out the reaction (2Z,6Z)-farnesyl diphosphate = beta-bisabolene + diphosphate. It catalyses the reaction (2E,6E)-farnesyl diphosphate = beta-bisabolene + diphosphate. The catalysed reaction is (2E,6E)-farnesyl diphosphate = (Z)-gamma-bisabolene + diphosphate. The enzyme catalyses (2E,6E)-farnesyl diphosphate = (E)-gamma-bisabolene + diphosphate. It carries out the reaction (2Z,6Z)-farnesyl diphosphate = (E)-gamma-bisabolene + diphosphate. It functions in the pathway secondary metabolite biosynthesis; terpenoid biosynthesis. Functionally, sesquiterpene synthase involved in the biosynthesis of volatile compounds. Mediates the conversion of (2E,6E)-farnesyl diphosphate ((EE)-FPP) into beta-bisabolene, and of (2Z,6Z)-farnesyl diphosphate ((ZZ)-FPP) into alpha-bisabolene, but also smaller amounts of (Z)-gamma-bisabolene, (E)-gamma-bisabolene and nerolidol. This chain is Sesquiterpene synthase 14, found in Solanum lycopersicum (Tomato).